A 274-amino-acid chain; its full sequence is MARLRLTLAYDGTDFAGWQIQAAGGGRTVQGCLEEALATLCGQPVRVHGAGRTDSGVHALAQVAHADVPEHRAGLPWGKALTALLPKDVAVTEARLVAPDFHSRFDATGKEYRYTLWTRPGHVLPWRRPYVWDVGRYGTLDVAAMEACAGLFVGEHDFAAFQNAGTDVHSTVRRVWDVSRLAGTGPDETVWRFHGEGFLKQMVRNLMGALVAVGRGKATAEDVATLLAAGDRRRAPGTAPAQGLCLHAVEYGAPGVAGLPGLGDKPAEPAGSTT.

Aspartate 54 functions as the Nucleophile in the catalytic mechanism. Tyrosine 112 contacts substrate.

This sequence belongs to the tRNA pseudouridine synthase TruA family. As to quaternary structure, homodimer.

The enzyme catalyses uridine(38/39/40) in tRNA = pseudouridine(38/39/40) in tRNA. Functionally, formation of pseudouridine at positions 38, 39 and 40 in the anticodon stem and loop of transfer RNAs. The polypeptide is tRNA pseudouridine synthase A (Solidesulfovibrio magneticus (strain ATCC 700980 / DSM 13731 / RS-1) (Desulfovibrio magneticus)).